The primary structure comprises 376 residues: Transcription initiation factor IIA subunit 1 (376 aa).

Position 2 is an N-acetylalanine (Ala2). Low complexity-rich tracts occupy residues 69–79 and 89–105; these read QVQQQHQPQQQ and QAQP…TQQV. 3 disordered regions span residues 69 to 107, 246 to 265, and 274 to 329; these read QVQQ…QVLI, AQAQ…PAQT, and DGTG…QELF. Phosphoserine; by TAF1 occurs at positions 280, 281, 316, and 321. Residues 280-329 show a composition bias toward acidic residues; it reads SSEEDEDEEEDYDDDEEEDKEKDGAEDGQVEEEPLNSEDDVSDEEGQELF. Positions 343 and 344 each coordinate DNA.

It belongs to the TFIIA subunit 1 family. In terms of assembly, TFIIA is a heterodimer of the large unprocessed subunit 1 and a small subunit gamma. It was originally believed to be a heterotrimer of an alpha (p35), a beta (p19) and a gamma subunit (p12). TFIIA forms a complex with TBP. Part of TBP-based Pol II pre-initiation complex (PIC), in which Pol II core assembles with general transcription factors and other specific initiation factors including GTF2E1, GTF2E2, GTF2F1, GTF2F2, TCEA1, ERCC2, ERCC3, GTF2H2, GTF2H3, GTF2H4, GTF2H5, GTF2A1, GTF2A2, GTF2B and TBP; this large multi-subunit PIC complex mediates DNA unwinding and targets Pol II core to the transcription start site where the first phosphodiester bond forms. Post-translationally, the alpha and beta subunits are postranslationally produced from the precursor formby TASP1. The cleavage promotes proteasomal degradation.

The protein localises to the nucleus. Functionally, TFIIA is a component of the transcription machinery of RNA polymerase II and plays an important role in transcriptional activation. TFIIA in a complex with TBP mediates transcriptional activity. This chain is Transcription initiation factor IIA subunit 1 (GTF2A1), found in Pongo abelii (Sumatran orangutan).